Here is a 329-residue protein sequence, read N- to C-terminus: Malate dehydrogenase (329 aa).

Residue 12 to 18 (GAAGQIG) participates in NAD(+) binding. Substrate-binding residues include Arg-93 and Arg-99. Residues Asn-106, Gln-113, and 130–132 (VGN) each bind NAD(+). The substrate site is built by Asn-132 and Arg-166. Catalysis depends on His-191, which acts as the Proton acceptor.

The protein belongs to the LDH/MDH superfamily. MDH type 2 family.

The catalysed reaction is (S)-malate + NAD(+) = oxaloacetate + NADH + H(+). Functionally, catalyzes the reversible oxidation of malate to oxaloacetate. The protein is Malate dehydrogenase of Aromatoleum aromaticum (strain DSM 19018 / LMG 30748 / EbN1) (Azoarcus sp. (strain EbN1)).